The primary structure comprises 227 residues: Germin-like protein subfamily T member 3 (227 aa).

An N-terminal signal peptide occupies residues 1 to 26 (MAHISQISSFLSIVLIFLALCITLFT). Cys44 and Cys59 are oxidised to a cystine. The Cupin type-1 domain maps to 71-219 (SGLNTPLNTS…AFKADSKTIN (149 aa)). N-linked (GlcNAc...) asparagine glycosylation occurs at Asn78. The Mn(2+) site is built by His119, His121, and Glu126. Asn143 is a glycosylation site (N-linked (GlcNAc...) asparagine). His165 contributes to the Mn(2+) binding site.

The protein belongs to the germin family. Oligomer (believed to be a pentamer but probably hexamer).

The protein localises to the secreted. The protein resides in the extracellular space. Its subcellular location is the apoplast. Functionally, may play a role in plant defense. Probably has no oxalate oxidase activity even if the active site is conserved. This Arabidopsis thaliana (Mouse-ear cress) protein is Germin-like protein subfamily T member 3.